The sequence spans 286 residues: ATP synthase gamma chain (286 aa).

Belongs to the ATPase gamma chain family. F-type ATPases have 2 components, CF(1) - the catalytic core - and CF(0) - the membrane proton channel. CF(1) has five subunits: alpha(3), beta(3), gamma(1), delta(1), epsilon(1). CF(0) has three main subunits: a, b and c.

The protein localises to the cell inner membrane. In terms of biological role, produces ATP from ADP in the presence of a proton gradient across the membrane. The gamma chain is believed to be important in regulating ATPase activity and the flow of protons through the CF(0) complex. The protein is ATP synthase gamma chain of Christiangramia forsetii (strain DSM 17595 / CGMCC 1.15422 / KT0803) (Gramella forsetii).